A 118-amino-acid polypeptide reads, in one-letter code: Mu-like prophage FluMu tail tube protein (118 aa).

The tract at residues 12 to 32 (RLNGKEWPSDNDGTLTPGGKE) is disordered.

To phage Mu protein M.

The polypeptide is Mu-like prophage FluMu tail tube protein (Haemophilus influenzae (strain ATCC 51907 / DSM 11121 / KW20 / Rd)).